We begin with the raw amino-acid sequence, 71 residues long: Large ribosomal subunit protein bL31 (71 aa).

4 residues coordinate Zn(2+): C16, C18, C37, and C40.

This sequence belongs to the bacterial ribosomal protein bL31 family. Type A subfamily. In terms of assembly, part of the 50S ribosomal subunit. Requires Zn(2+) as cofactor.

In terms of biological role, binds the 23S rRNA. This Aeromonas salmonicida (strain A449) protein is Large ribosomal subunit protein bL31.